A 1273-amino-acid chain; its full sequence is Kinesin-like protein KIN-14A (1273 aa).

A disordered region spans residues 1–52 (MADQRSKTNRWNWEVSGFEPRKSSSNASFAESTGHRTTGPLLRRNSISTPSL). The stretch at 59 to 89 (ASKVNGLKEKVKLAKEDYLELRQEATDLQEY) forms a coiled coil. The Kinesin motor domain maps to 142–456 (NIKVFCRARP…LNYAARARNT (315 aa)). ATP is bound at residue 223-230 (GQTNAGKT). 3 coiled-coil regions span residues 466 to 511 (IKKW…CVLL), 559 to 595 (QLDQ…AVRS), and 627 to 657 (TKKL…RLTE). Disordered stretches follow at residues 827-847 (KPNT…RSPV) and 1136-1157 (QEDT…SISS). A compositionally biased stretch (low complexity) spans 830–846 (TGRSKSTSRGSSPGRSP).

Belongs to the TRAFAC class myosin-kinesin ATPase superfamily. Kinesin family. KIN-14 subfamily. As to quaternary structure, homodimer and heterodimer with KCA2. Interacts with CDKA-1. Interacts with AL1, a geminivirus (TGMV) protein essential for viral replication. Interacts with LUE1/KSS. In terms of processing, part of the phosphorylation is not CDK-dependent. In terms of tissue distribution, widely expressed.

The protein localises to the nucleus. Its subcellular location is the cytoplasm. It is found in the cytoskeleton. It localises to the spindle. The protein resides in the chromosome. The protein localises to the cell membrane. Its subcellular location is the phragmoplast. Kinesin-like protein required for chloroplast movements and anchor to the plasma membrane. Mediates chloroplast movement via chloroplast actin (cp-actin) filaments. Required for the chloroplast avoidance response under high intensity blue light. Mediates redundantly with CHUP1 the nuclear avoidance response under high intensity blue light. May act as a mitotic kinesin. Probably involved in division plane determination. The chain is Kinesin-like protein KIN-14A from Arabidopsis thaliana (Mouse-ear cress).